Here is a 346-residue protein sequence, read N- to C-terminus: Small ribosomal subunit biogenesis GTPase RsgA (346 aa).

Residues 1–26 are disordered; sequence MAKRKLTQNQTRRIQSNNAKTLHRHK. Residues 7–20 are compositionally biased toward polar residues; it reads TQNQTRRIQSNNAK. In terms of domain architecture, CP-type G spans 103 to 271; that stretch reads ENEISRPDYY…LIDSPGIREF (169 aa). GTP-binding positions include 159 to 162 and 213 to 221; these read NKVD and GQSGVGKSS. Zn(2+) contacts are provided by Cys-295, Cys-300, His-302, and Cys-308.

This sequence belongs to the TRAFAC class YlqF/YawG GTPase family. RsgA subfamily. In terms of assembly, monomer. Associates with 30S ribosomal subunit, binds 16S rRNA. Requires Zn(2+) as cofactor.

The protein localises to the cytoplasm. Its function is as follows. One of several proteins that assist in the late maturation steps of the functional core of the 30S ribosomal subunit. Helps release RbfA from mature subunits. May play a role in the assembly of ribosomal proteins into the subunit. Circularly permuted GTPase that catalyzes slow GTP hydrolysis, GTPase activity is stimulated by the 30S ribosomal subunit. This is Small ribosomal subunit biogenesis GTPase RsgA from Haemophilus influenzae (strain PittGG).